The primary structure comprises 336 residues: MTTLSPENSLSARQSASFILVKRKPPIDKTEWDSFFDESGHLAKSRDFICVNILERGLHPFVRTEAWKFLTGYFSWQSSQDERLTVDSMRRKNYKALCQMYEKIQPLLENLHRNFTETRNNIARDIQKIYDKDPLGNVLIDKKRLEKILLLSYVCNTQAEYQQGFHEMMMLFQLMVEHDHETFWLFQFFLQKTEHSCVINIGVAKNLDMLSTLITFLDPVFAEHLKGKGAGAVQSLFPWFCFCFQRAFKSFDDVWRLWEVLLTGKPCRNFQVLVAYSMLQMVREQVLQESMGGDDILLACNNLIDLDADELISAACVVYAELIQKDVPQTLKDFFL.

The Rab-GAP TBC domain occupies 57-265; the sequence is GLHPFVRTEA…RLWEVLLTGK (209 aa).

As to quaternary structure, interacts with ACTB. Interacts with ARMC12, TOMM20, DNAH7 and RAP1A. Interacts with RAB10. Expressed in round and elongated spermatids (at protein level). Expressed specifically in adult testis and very weakly in fetal brain.

It localises to the cytoplasmic vesicle. It is found in the secretory vesicle. Its subcellular location is the acrosome. The protein resides in the cytoplasm. The protein localises to the cytoskeleton. Acts as a GTPase-activating protein for Rab family protein(s). Essential for the establishment of male fertility, and is required for both the production of normal sperm number and sperm function. Plays an important role in the formation of intact mitochondria, outer dense fibers and axoneme within the sperm tail. Essential for sperm mitochondrial sheath formation and for the interactions of ARMC12 with VDAC2 and VDAC3. May be involved in acrosome formation and cytoskeletal reorganization during spermiogenesis, possibly by regulating RAB3A activity. This chain is TBC1 domain family member 21 (TBC1D21), found in Homo sapiens (Human).